A 638-amino-acid chain; its full sequence is Threonine--tRNA ligase (638 aa).

Positions 1-61 (MPNITLPDGS…EADTPLAIVT (61 aa)) constitute a TGS domain. Residues 242–533 (DHRKLGRLLD…LIEHYAGALP (292 aa)) form a catalytic region. 3 residues coordinate Zn(2+): cysteine 333, histidine 384, and histidine 510.

The protein belongs to the class-II aminoacyl-tRNA synthetase family. Homodimer. Requires Zn(2+) as cofactor.

It localises to the cytoplasm. The enzyme catalyses tRNA(Thr) + L-threonine + ATP = L-threonyl-tRNA(Thr) + AMP + diphosphate + H(+). Its function is as follows. Catalyzes the attachment of threonine to tRNA(Thr) in a two-step reaction: L-threonine is first activated by ATP to form Thr-AMP and then transferred to the acceptor end of tRNA(Thr). Also edits incorrectly charged L-seryl-tRNA(Thr). The chain is Threonine--tRNA ligase from Aromatoleum aromaticum (strain DSM 19018 / LMG 30748 / EbN1) (Azoarcus sp. (strain EbN1)).